The sequence spans 394 residues: 1-deoxy-D-xylulose 5-phosphate reductoisomerase (394 aa).

NADPH contacts are provided by threonine 10, glycine 11, serine 12, isoleucine 13, asparagine 38, and asparagine 125. Lysine 126 is a binding site for 1-deoxy-D-xylulose 5-phosphate. An NADPH-binding site is contributed by glutamate 127. Residue aspartate 151 participates in Mn(2+) binding. Serine 152, glutamate 153, serine 182, and histidine 205 together coordinate 1-deoxy-D-xylulose 5-phosphate. Glutamate 153 is a Mn(2+) binding site. Glycine 211 contributes to the NADPH binding site. 4 residues coordinate 1-deoxy-D-xylulose 5-phosphate: serine 218, asparagine 223, lysine 224, and glutamate 227. Glutamate 227 serves as a coordination point for Mn(2+).

This sequence belongs to the DXR family. Mg(2+) serves as cofactor. It depends on Mn(2+) as a cofactor.

The catalysed reaction is 2-C-methyl-D-erythritol 4-phosphate + NADP(+) = 1-deoxy-D-xylulose 5-phosphate + NADPH + H(+). It participates in isoprenoid biosynthesis; isopentenyl diphosphate biosynthesis via DXP pathway; isopentenyl diphosphate from 1-deoxy-D-xylulose 5-phosphate: step 1/6. Catalyzes the NADPH-dependent rearrangement and reduction of 1-deoxy-D-xylulose-5-phosphate (DXP) to 2-C-methyl-D-erythritol 4-phosphate (MEP). This chain is 1-deoxy-D-xylulose 5-phosphate reductoisomerase, found in Methylococcus capsulatus (strain ATCC 33009 / NCIMB 11132 / Bath).